We begin with the raw amino-acid sequence, 208 residues long: UPF0637 protein BCG9842_B1177 (208 aa).

This sequence belongs to the UPF0637 family.

This is UPF0637 protein BCG9842_B1177 from Bacillus cereus (strain G9842).